Reading from the N-terminus, the 514-residue chain is Alanine--glyoxylate aminotransferase 2, mitochondrial (514 aa).

The transit peptide at 1-41 (MTLIWRHLLRPLCLVTSAPRILEMHPFLSLGTSRTSVTKLS) directs the protein to the mitochondrion. Lys-71 bears the N6-acetyllysine; alternate mark. Position 71 is an N6-succinyllysine; alternate (Lys-71). An N6-acetyllysine modification is found at Lys-84. Lys-262 is subject to N6-acetyllysine; alternate. Lys-262 carries the N6-succinyllysine; alternate modification. At Lys-304 the chain carries N6-succinyllysine. Lys-350 carries the N6-(pyridoxal phosphate)lysine modification. N6-acetyllysine; alternate occurs at positions 417 and 420. N6-succinyllysine; alternate occurs at positions 417 and 420.

It belongs to the class-III pyridoxal-phosphate-dependent aminotransferase family. Homotetramer. Pyridoxal 5'-phosphate serves as cofactor. Expressed in the convoluted tubule in the kidney and in the liver hepatocytes (at protein level).

The protein localises to the mitochondrion. The enzyme catalyses glyoxylate + L-alanine = glycine + pyruvate. It catalyses the reaction (R)-3-amino-2-methylpropanoate + pyruvate = 2-methyl-3-oxopropanoate + L-alanine. The catalysed reaction is 3-oxopropanoate + L-alanine = beta-alanine + pyruvate. It carries out the reaction 2-oxobutanoate + L-alanine = (2S)-2-aminobutanoate + pyruvate. The enzyme catalyses N(omega),N(omega)-dimethyl-L-arginine + pyruvate = 5-(3,3-dimethylguanidino)-2-oxopentanoate + L-alanine. It catalyses the reaction N(omega),N('omega)-dimethyl-L-arginine + pyruvate = 5-(3,3'-dimethylguanidino)-2-oxopentanoate + L-alanine. The catalysed reaction is N(omega),N(omega)-dimethyl-L-arginine + glyoxylate = 5-(3,3-dimethylguanidino)-2-oxopentanoate + glycine. It carries out the reaction N(omega),N('omega)-dimethyl-L-arginine + glyoxylate = 5-(3,3'-dimethylguanidino)-2-oxopentanoate + glycine. The enzyme catalyses N(omega)-methyl-L-arginine + pyruvate = 5-(3-methylguanidino)-2-oxopentanoate + L-alanine. It catalyses the reaction N(omega)-methyl-L-arginine + glyoxylate = 5-(3-methylguanidino)-2-oxopentanoate + glycine. The catalysed reaction is L-ornithine + pyruvate = 5-amino-2-oxopentanoate + L-alanine. It carries out the reaction L-ornithine + glyoxylate = 5-amino-2-oxopentanoate + glycine. The enzyme catalyses (2S)-2-aminobutanoate + glyoxylate = 2-oxobutanoate + glycine. It catalyses the reaction N(omega),N(omega)-dimethyl-L-arginine + oxaloacetate = 5-(3,3-dimethylguanidino)-2-oxopentanoate + L-aspartate. The catalysed reaction is oxaloacetate + L-alanine = L-aspartate + pyruvate. It carries out the reaction N(omega),N(omega)-dimethyl-L-arginine + 2-oxobutanoate = 5-(3,3-dimethylguanidino)-2-oxopentanoate + (2S)-2-aminobutanoate. The enzyme catalyses 2-oxopentanoate + N(omega),N(omega)-dimethyl-L-arginine = 5-(3,3-dimethylguanidino)-2-oxopentanoate + L-2-aminopentanoate. It catalyses the reaction 2-oxohexanoate + N(omega),N(omega)-dimethyl-L-arginine = L-2-aminohexanoate + 5-(3,3-dimethylguanidino)-2-oxopentanoate. Multifunctional aminotransferase with a broad substrate specificity. Catalyzes the conversion of glyoxylate to glycine using alanine as the amino donor. Catalyzes metabolism of not L- but the D-isomer of D-beta-aminoisobutyric acid to generate 2-methyl-3-oxopropanoate and alanine. Catalyzes the transfer of the amino group from beta-alanine to pyruvate to yield L-alanine and 3-oxopropanoate. Can metabolize NG-monomethyl-L-arginine (NMMA), asymmetric NG,NG-dimethyl-L-arginine (ADMA) and symmetric NG,N'G-dimethyl-L-arginine (SDMA). ADMA is a potent inhibitor of nitric-oxide (NO) synthase, and this activity provides mechanism through which the kidney regulates blood pressure. The protein is Alanine--glyoxylate aminotransferase 2, mitochondrial (AGXT2) of Homo sapiens (Human).